Consider the following 129-residue polypeptide: Basic blue protein (129 aa).

The first 33 residues, 1-33 (MAKGRGSASWSARAIVTLMAVSVLLLQADYVQA), serve as a signal peptide directing secretion. The region spanning 34–129 (ATYTVGDSGI…SDMKIAVTAV (96 aa)) is the Phytocyanin domain. The Cu cation site is built by H72, C112, H117, and M122. The cysteines at positions 85 and 118 are disulfide-linked.

As to expression, expressed in the inflorescence and in the transmitting tract of the pistil. Detected in roots, stems, cauline leaves, cotyledons, hypocotyls, guard cells, pistils, sepals, stamen filaments and vascular bundles of roots but not of leaves. Not expressed in petals, anthers or pollen.

It is found in the secreted. The protein resides in the extracellular space. It localises to the extracellular matrix. Its function is as follows. Forms a concentration gradient along the pollen tube growth path, with a lower level in the stigma papilla cell wall and a higher level in the transmitting tract extracellular matix of the style. The sequence is that of Basic blue protein (ARPN) from Arabidopsis thaliana (Mouse-ear cress).